A 340-amino-acid polypeptide reads, in one-letter code: Protein HP_1247 (340 aa).

As to quaternary structure, seems to interact with H.pylori HolB.

In terms of biological role, could be the functional equivalent of DNA polymerase III delta subunit (HolA). This is Protein HP_1247 from Helicobacter pylori (strain ATCC 700392 / 26695) (Campylobacter pylori).